We begin with the raw amino-acid sequence, 821 residues long: Cation/H(+) antiporter 15 (821 aa).

Transmembrane regions (helical) follow at residues 37-57 (LPLFVLQLTLVVVVTRFFVFI), 65-82 (RVISEILGGIVLGPSVLG), 97-117 (VMVLETMANVGLLYFLFLVGV), 131-151 (ALTIAIGGMVLPFLIGAAFSF), 166-186 (ILFLGVALSVTAFPVLARILA), 200-220 (MSAALVNDMFAWILLALAIAL), 228-248 (FASLWVMISSAVFIAVCVFVV), 268-288 (FHICLILTGVMISGFITDAIG), 292-312 (VFGAFVFGLVIPNGPLGLTLI), 318-338 (FVSGLLLPLFFAISGLKTNIA), 350-370 (FLVIFLACAGKVIGTVIVAFF), 378-398 (GITLGLLLNTKGLVEMIVLNV), and 410-430 (FATMVLVALVMTGVITPIVTI). The interval 800–821 (DFPESPVHSHETKVTYGLENPR) is disordered.

It belongs to the monovalent cation:proton antiporter 2 (CPA2) transporter (TC 2.A.37) family. CHX (TC 2.A.37.4) subfamily. In terms of tissue distribution, specifically expressed in pollen.

Its subcellular location is the membrane. Functionally, may operate as a cation/H(+) antiporter. The polypeptide is Cation/H(+) antiporter 15 (CHX15) (Arabidopsis thaliana (Mouse-ear cress)).